The primary structure comprises 728 residues: Beta-porphyranase A (728 aa).

Residues 1–22 (MSYKYIFLLSAFTLGVPPGIYC) form the signal peptide. Substrate contacts are provided by His-53, Lys-76, Trp-78, Lys-87, His-114, and Asn-151. The active-site Proton donor is the Glu-152. Residues His-235, Glu-279, Ser-326, and Trp-331 each coordinate substrate. The active-site Nucleophile is the Glu-279. The 103-residue stretch at 599-701 (TLQNGTFSEG…AVSFDFNSTV (103 aa)) folds into the CBM-cenC domain.

This sequence belongs to the glycosyl hydrolase 86 family.

It carries out the reaction Hydrolysis of beta-D-galactopyranose-(1-&gt;4)-alpha-L-galactopyranose-6-sulfate linkages in porphyran.. Its function is as follows. Cleaves the sulfated polysaccharide porphyran at the (1-&gt;4) linkages between beta-D-galactopyranose and alpha-L-galactopyranose-6-sulfate, forming mostly the disaccharide alpha-L-galactopyranose-6-sulfate-(1-&gt;3)-beta-D-galactose. Some longer oligosaccharides of even number of residues are also observed. Inactive on the non-sulfated agarose portion of the porphyran backbone. Can also use methylated galactoses. The protein is Beta-porphyranase A of Phocaeicola plebeius (strain DSM 17135 / JCM 12973 / CCUG 54634 / M2) (Bacteroides plebeius).